The following is a 343-amino-acid chain: MAGNCSWEAHSTNQNKMCPGMSEALELYSRGFLTIEQIATLPPPAVTNYIFLLLCLCGLVGNGLVLWFFGFSIKRTPFSIYFLHLASADGIYLFSKAVIALLNMGTFLGSFPDYVRRVSRIVGLCTFFAGVSLLPAISIERCVSVIFPMWYWRRRPKRLSAGVCALLWLLSFLVTSIHNYFCMFLGHEASGTACLNMDISLGILLFFLFCPLMVLPCLALILHVECRARRRQRSAKLNHVVLAIVSVFLVSSIYLGIDWFLFWVFQIPAPFPEYVTDLCICINSSAKPIVYFLAGRDKSQRLWEPLRVVFQRALRDGAEPGDAASSTPNTVTMEMQCPSGNAS.

Over 1 to 44 (MAGNCSWEAHSTNQNKMCPGMSEALELYSRGFLTIEQIATLPPP) the chain is Extracellular. N4 is a glycosylation site (N-linked (GlcNAc...) asparagine). Residues 45–66 (AVTNYIFLLLCLCGLVGNGLVL) form a helical membrane-spanning segment. Residues 67-82 (WFFGFSIKRTPFSIYF) are Cytoplasmic-facing. The helical transmembrane segment at 83–104 (LHLASADGIYLFSKAVIALLNM) threads the bilayer. Residues 105-123 (GTFLGSFPDYVRRVSRIVG) are Extracellular-facing. The chain crosses the membrane as a helical span at residues 124–144 (LCTFFAGVSLLPAISIERCVS). At 145 to 160 (VIFPMWYWRRRPKRLS) the chain is on the cytoplasmic side. A helical transmembrane segment spans residues 161–181 (AGVCALLWLLSFLVTSIHNYF). Over 182–198 (CMFLGHEASGTACLNMD) the chain is Extracellular. Residues 199-220 (ISLGILLFFLFCPLMVLPCLAL) form a helical membrane-spanning segment. Residues 221–241 (ILHVECRARRRQRSAKLNHVV) are Cytoplasmic-facing. A helical transmembrane segment spans residues 242 to 263 (LAIVSVFLVSSIYLGIDWFLFW). Residues 264–273 (VFQIPAPFPE) are Extracellular-facing. A helical transmembrane segment spans residues 274–294 (YVTDLCICINSSAKPIVYFLA). Over 295-343 (GRDKSQRLWEPLRVVFQRALRDGAEPGDAASSTPNTVTMEMQCPSGNAS) the chain is Cytoplasmic. Residues 318 to 343 (AEPGDAASSTPNTVTMEMQCPSGNAS) form a disordered region. The segment covering 324-343 (ASSTPNTVTMEMQCPSGNAS) has biased composition (polar residues).

The protein belongs to the G-protein coupled receptor 1 family. Mas subfamily. Gut, vas deferens, uterus and aorta; barely detectable in liver, kidney, lung, and salivary gland. In the brain, markedly abundant in the cerebellum.

The protein resides in the cell membrane. Functionally, orphan receptor. May bind to a neuropeptide and may regulate nociceptor function and/or development, including the sensation or modulation of pain. In Rattus norvegicus (Rat), this protein is Mas-related G-protein coupled receptor member F (Mrgprf).